We begin with the raw amino-acid sequence, 937 residues long: Translation initiation factor IF-2 (937 aa).

2 disordered regions span residues 61-156 (IQAN…KAKQ) and 171-274 (LTQS…SHKI). Positions 179–196 (AKKEISEVKKQEQEIKRH) are enriched in basic and acidic residues. Residues 197-208 (ENIKRRTGFRVI) are compositionally biased toward basic residues. Residues 237-252 (EDIKKEWQEKDKQEAK) show a composition bias toward basic and acidic residues. Positions 436-605 (ERPPVVTIMG…LIQADIMELK (170 aa)) constitute a tr-type G domain. Positions 445-452 (GHVDHGKT) are G1. 445–452 (GHVDHGKT) is a binding site for GTP. A G2 region spans residues 470–474 (GITQH). The segment at 491-494 (DTPG) is G3. GTP contacts are provided by residues 491-495 (DTPGH) and 545-548 (NKMD). The tract at residues 545-548 (NKMD) is G4. Positions 581–583 (SAK) are G5.

This sequence belongs to the TRAFAC class translation factor GTPase superfamily. Classic translation factor GTPase family. IF-2 subfamily.

The protein resides in the cytoplasm. Its function is as follows. One of the essential components for the initiation of protein synthesis. Protects formylmethionyl-tRNA from spontaneous hydrolysis and promotes its binding to the 30S ribosomal subunits. Also involved in the hydrolysis of GTP during the formation of the 70S ribosomal complex. In Helicobacter pylori (strain G27), this protein is Translation initiation factor IF-2.